The primary structure comprises 1288 residues: 5-oxoprolinase (1288 aa).

T151 carries the phosphothreonine modification. Positions 1249 to 1269 are disordered; the sequence is GGGGYGDPEDPAPLPGSPLQP. S1265 bears the Phosphoserine mark.

Belongs to the oxoprolinase family. Homodimer. Expressed in coronary artery and kidney.

The protein localises to the cytoplasm. It localises to the cytosol. It carries out the reaction 5-oxo-L-proline + ATP + 2 H2O = L-glutamate + ADP + phosphate + H(+). Catalyzes the cleavage of 5-oxo-L-proline to form L-glutamate coupled to the hydrolysis of ATP to ADP and inorganic phosphate. The sequence is that of 5-oxoprolinase (OPLAH) from Bos taurus (Bovine).